Here is a 138-residue protein sequence, read N- to C-terminus: Probable glycine cleavage system H protein 1 (138 aa).

A Lipoyl-binding domain is found at 30-112 (IATVGITDYA…YGRGWIFKLK (83 aa)). An N6-lipoyllysine modification is found at Lys-71.

This sequence belongs to the GcvH family. In terms of assembly, the glycine cleavage system is composed of four proteins: P, T, L and H. (R)-lipoate serves as cofactor.

The glycine cleavage system catalyzes the degradation of glycine. The H protein shuttles the methylamine group of glycine from the P protein to the T protein. In Sulfolobus acidocaldarius (strain ATCC 33909 / DSM 639 / JCM 8929 / NBRC 15157 / NCIMB 11770), this protein is Probable glycine cleavage system H protein 1.